The following is a 284-amino-acid chain: Ribosomal RNA small subunit methyltransferase A (284 aa).

Residues N26, L28, G53, E74, D97, and N127 each contribute to the S-adenosyl-L-methionine site.

Belongs to the class I-like SAM-binding methyltransferase superfamily. rRNA adenine N(6)-methyltransferase family. RsmA subfamily.

The protein localises to the cytoplasm. The catalysed reaction is adenosine(1518)/adenosine(1519) in 16S rRNA + 4 S-adenosyl-L-methionine = N(6)-dimethyladenosine(1518)/N(6)-dimethyladenosine(1519) in 16S rRNA + 4 S-adenosyl-L-homocysteine + 4 H(+). Specifically dimethylates two adjacent adenosines (A1518 and A1519) in the loop of a conserved hairpin near the 3'-end of 16S rRNA in the 30S particle. May play a critical role in biogenesis of 30S subunits. This Anaeromyxobacter dehalogenans (strain 2CP-1 / ATCC BAA-258) protein is Ribosomal RNA small subunit methyltransferase A.